The sequence spans 235 residues: Protein shisa-5 (235 aa).

An N-terminal signal peptide occupies residues 1-26 (MAAPAPSLWTLLLLLLLLPPPPGAHG). The Extracellular segment spans residues 27 to 105 (ELCRPFGEDN…SSFDSDPMSG (79 aa)). A helical membrane pass occupies residues 106-126 (FGATVAIGVTIFVVFIATIII). At 127 to 235 (CFTCSCCCLY…TYMDSLKTIP (109 aa)) the chain is on the cytoplasmic side. The tract at residues 157–235 (APYPQPQPQP…TYMDSLKTIP (79 aa)) is disordered. Pro residues-rich tracts occupy residues 159–172 (YPQPQPQPVAPSYP) and 181–211 (PMPPQPGMPAAPYPTQYPPPYLAQPTGPPPY).

This sequence belongs to the shisa family. As to quaternary structure, interacts with PDCD6; PDCD6 can stabilize SHISA5. As to expression, spleen and thymus.

It localises to the endoplasmic reticulum membrane. The protein localises to the nucleus membrane. Can induce apoptosis in a caspase-dependent manner and plays a role in p53/TP53-dependent apoptosis. This is Protein shisa-5 (Shisa5) from Mus musculus (Mouse).